The sequence spans 425 residues: MLNIKWIRENKELFDEKLSQRFIEPMSSKIAMLDGKKRKITSLIQEFQHARKVKSKILGNMASKSGEEFEGLQRDVKHINEKLEALEQELNNNNELNELLNMFPNIPDEEVPYGMDESMNKLVRTYGETNPNALNKQHFELGIKLNLMDFEQTAKISGTRFVTLKGDLAKLERALINFMIDVHTKEWDFFEISPPVLVRDNAMYNAGQLPKFAEESFATTNGYRLIPTAEVSLVNMVADTIIPREKLPIRYVAYTPCFRSEAGSSGKDTRGMIRLHQFGKVELVSITTPEESTNEHEYITNASETILQKLNLPYRVMLLCTGDMGFAAKKTYDIEIWLPGQKQYREIASCSNCGDFQARRMKARYKEFGSNETTLVHTLNASGLPIGRTMVAILENYQNEDGSITIPDVLINYMGGLQKIIAYSE.

228 to 230 (TAE) provides a ligand contact to L-serine. 259–261 (RSE) is an ATP binding site. Residue Glu282 coordinates L-serine. Residue 346 to 349 (EIAS) participates in ATP binding. Position 382 (Ser382) interacts with L-serine.

The protein belongs to the class-II aminoacyl-tRNA synthetase family. Type-1 seryl-tRNA synthetase subfamily. Homodimer. The tRNA molecule binds across the dimer.

The protein localises to the cytoplasm. It catalyses the reaction tRNA(Ser) + L-serine + ATP = L-seryl-tRNA(Ser) + AMP + diphosphate + H(+). The enzyme catalyses tRNA(Sec) + L-serine + ATP = L-seryl-tRNA(Sec) + AMP + diphosphate + H(+). Its pathway is aminoacyl-tRNA biosynthesis; selenocysteinyl-tRNA(Sec) biosynthesis; L-seryl-tRNA(Sec) from L-serine and tRNA(Sec): step 1/1. Functionally, catalyzes the attachment of serine to tRNA(Ser). Is also able to aminoacylate tRNA(Sec) with serine, to form the misacylated tRNA L-seryl-tRNA(Sec), which will be further converted into selenocysteinyl-tRNA(Sec). This chain is Serine--tRNA ligase, found in Rickettsia africae (strain ESF-5).